A 466-amino-acid chain; its full sequence is 55 kDa erythrocyte membrane protein (466 aa).

T2 is subject to N-acetylthreonine. Phosphoserine is present on residues S13 and S19. T49 bears the Phosphothreonine mark. 3 positions are modified to phosphoserine: S52, S57, and S110. The 82-residue stretch at 71–152 (LIQFEKVTEE…MISLKVIPNQ (82 aa)) folds into the PDZ domain. In terms of domain architecture, SH3 spans 158–228 (ALQMFMRAQF…PSPELQEWRV (71 aa)). S243 carries the phosphoserine modification. Residues 268-466 (VVSYEEVVRL…PQWVPVSWVY (199 aa)) are interaction with PALS1. The 170-residue stretch at 282–451 (RKTLVLIGAS…TLKKLQEAFD (170 aa)) folds into the Guanylate kinase-like domain.

Belongs to the MAGUK family. Heterodimer with PALS1. Interacts with DLG5 and NF2. Interacts (via guanylate kinase-like domain) with WHRN (via third PDZ domain). Palmitoylated. As to expression, ubiquitous.

The protein localises to the cell membrane. It is found in the cell projection. Its subcellular location is the stereocilium. Essential regulator of neutrophil polarity. Regulates neutrophil polarization by regulating AKT1 phosphorylation through a mechanism that is independent of PIK3CG activity. This is 55 kDa erythrocyte membrane protein (MPP1) from Homo sapiens (Human).